Consider the following 232-residue polypeptide: 2-C-methyl-D-erythritol 4-phosphate cytidylyltransferase (232 aa).

The protein belongs to the IspD/TarI cytidylyltransferase family. IspD subfamily.

It catalyses the reaction 2-C-methyl-D-erythritol 4-phosphate + CTP + H(+) = 4-CDP-2-C-methyl-D-erythritol + diphosphate. Its pathway is isoprenoid biosynthesis; isopentenyl diphosphate biosynthesis via DXP pathway; isopentenyl diphosphate from 1-deoxy-D-xylulose 5-phosphate: step 2/6. Functionally, catalyzes the formation of 4-diphosphocytidyl-2-C-methyl-D-erythritol from CTP and 2-C-methyl-D-erythritol 4-phosphate (MEP). This is 2-C-methyl-D-erythritol 4-phosphate cytidylyltransferase from Deinococcus radiodurans (strain ATCC 13939 / DSM 20539 / JCM 16871 / CCUG 27074 / LMG 4051 / NBRC 15346 / NCIMB 9279 / VKM B-1422 / R1).